We begin with the raw amino-acid sequence, 211 residues long: Protein-L-isoaspartate O-methyltransferase 2 (211 aa).

Serine 60 is an active-site residue.

The protein belongs to the methyltransferase superfamily. L-isoaspartyl/D-aspartyl protein methyltransferase family.

The protein resides in the cytoplasm. It catalyses the reaction [protein]-L-isoaspartate + S-adenosyl-L-methionine = [protein]-L-isoaspartate alpha-methyl ester + S-adenosyl-L-homocysteine. Its function is as follows. Catalyzes the methyl esterification of L-isoaspartyl residues in peptides and proteins that result from spontaneous decomposition of normal L-aspartyl and L-asparaginyl residues. It plays a role in the repair and/or degradation of damaged proteins. This chain is Protein-L-isoaspartate O-methyltransferase 2, found in Nitrosospira multiformis (strain ATCC 25196 / NCIMB 11849 / C 71).